Here is a 248-residue protein sequence, read N- to C-terminus: DCN1-like protein 4 (248 aa).

The segment at 1 to 35 (MPRGKRRAADTISDNMDHGQPKRARTSYTSIPTQQ) is disordered. Positions 26 to 35 (TSYTSIPTQQ) are enriched in polar residues. The DCUN1 domain maps to 47-235 (FSQKRCMAWF…MLDEFVEWLR (189 aa)).

The protein resides in the nucleus. Inhibits neddylation of cullin components of SCF-type E3 ubiquitin ligase complexes and thus regulates SCF-type complex activity. Essential for development. Function inhibits cell proliferation and cell growth. The sequence is that of DCN1-like protein 4 from Drosophila melanogaster (Fruit fly).